Reading from the N-terminus, the 473-residue chain is Ribosomal protein uS12 methylthiotransferase RimO (473 aa).

Residues 30–141 form the MTTase N-terminal domain; the sequence is ASVAVLHLGC…IVQIIERVER (112 aa). [4Fe-4S] cluster is bound by residues Cys-39, Cys-75, Cys-104, Cys-179, Cys-183, and Cys-186. The Radical SAM core domain occupies 165 to 394; the sequence is TTHAPVAYLR…MQVQQGITFR (230 aa). The TRAM domain maps to 397-463; that stretch reads REQVGRVVPV…PYDLFGQVVA (67 aa).

The protein belongs to the methylthiotransferase family. RimO subfamily. [4Fe-4S] cluster is required as a cofactor.

The protein localises to the cytoplasm. It catalyses the reaction L-aspartate(89)-[ribosomal protein uS12]-hydrogen + (sulfur carrier)-SH + AH2 + 2 S-adenosyl-L-methionine = 3-methylsulfanyl-L-aspartate(89)-[ribosomal protein uS12]-hydrogen + (sulfur carrier)-H + 5'-deoxyadenosine + L-methionine + A + S-adenosyl-L-homocysteine + 2 H(+). In terms of biological role, catalyzes the methylthiolation of an aspartic acid residue of ribosomal protein uS12. This is Ribosomal protein uS12 methylthiotransferase RimO from Synechococcus sp. (strain JA-2-3B'a(2-13)) (Cyanobacteria bacterium Yellowstone B-Prime).